A 352-amino-acid polypeptide reads, in one-letter code: Protein Wnt-3a (352 aa).

An N-terminal signal peptide occupies residues 1–18 (MAPLGYLLVLCSLKQALG). 11 disulfides stabilise this stretch: Cys77-Cys88, Cys128-Cys136, Cys138-Cys155, Cys203-Cys217, Cys205-Cys212, Cys281-Cys312, Cys297-Cys307, Cys311-Cys351, Cys327-Cys342, Cys329-Cys339, and Cys334-Cys335. N-linked (GlcNAc...) asparagine glycosylation occurs at Asn87. Ser209 carries the O-palmitoleoyl serine; by PORCN lipid modification. A glycan (N-linked (GlcNAc...) asparagine) is linked at Asn298.

It belongs to the Wnt family. Forms a soluble 1:1 complex with AFM; this prevents oligomerization and is required for prolonged biological activity. The complex with AFM may represent the physiological form in body fluids. Homooligomer; disulfide-linked, leading to inactivation. Interacts with APCDD1 and WLS. Component of the Wnt-Fzd-LRP5-LRP6 signaling complex that contains a WNT protein, a FZD protein and LRP5 or LRP6. Interacts directly in the complex with LRP6. Interacts with PORCN. Interacts with glypican GPC3. Interacts with PKD1 (via extracellular domain). Interacts with FZD5. Post-translationally, proteolytic processing by TIKI1 and TIKI2 promotes oxidation and formation of large disulfide-bond oligomers, leading to inactivation of WNT3A. Disulfide bonds have critical and distinct roles in secretion and activity. Loss of each conserved cysteine in WNT3A results in high molecular weight oxidized Wnt oligomers, which are formed through inter-Wnt disulfide bonding. In terms of processing, palmitoleoylation by PORCN is required for efficient binding to frizzled receptors. Palmitoleoylation is required for proper trafficking to cell surface, vacuolar acidification is critical to release palmitoleoylated WNT3A from WLS in secretory vesicles. Depalmitoleoylated by NOTUM, leading to inhibit Wnt signaling pathway, possibly by promoting disulfide bond formation and oligomerization. Dorsal portion of the neural tube (developing roof plate), and mesenchyme tissue surrounding the umbilical veins.

It is found in the secreted. Its subcellular location is the extracellular space. It localises to the extracellular matrix. Functionally, ligand for members of the frizzled family of seven transmembrane receptors. Functions in the canonical Wnt signaling pathway that results in activation of transcription factors of the TCF/LEF family. Required for normal embryonic mesoderm development and formation of caudal somites. Required for normal morphogenesis of the developing neural tube. Mediates self-renewal of the stem cells at the bottom on intestinal crypts (in vitro). This chain is Protein Wnt-3a (Wnt3a), found in Mus musculus (Mouse).